An 896-amino-acid polypeptide reads, in one-letter code: Protein translocase subunit SecA (896 aa).

ATP is bound by residues Gln87, 105–109 (GEGKT), and Asp512. 2 disordered regions span residues 565–584 (RRID…PGSS) and 840–896 (EAAQ…AHEA). Residues Cys876, Cys878, Cys887, and His888 each contribute to the Zn(2+) site. The span at 882–896 (KKYKHCHGNRAAHEA) shows a compositional bias: basic residues.

It belongs to the SecA family. As to quaternary structure, monomer and homodimer. Part of the essential Sec protein translocation apparatus which comprises SecA, SecYEG and auxiliary proteins SecDF-YajC and YidC. The cofactor is Zn(2+).

The protein resides in the cell inner membrane. Its subcellular location is the cytoplasm. The catalysed reaction is ATP + H2O + cellular proteinSide 1 = ADP + phosphate + cellular proteinSide 2.. Functionally, part of the Sec protein translocase complex. Interacts with the SecYEG preprotein conducting channel. Has a central role in coupling the hydrolysis of ATP to the transfer of proteins into and across the cell membrane, serving both as a receptor for the preprotein-SecB complex and as an ATP-driven molecular motor driving the stepwise translocation of polypeptide chains across the membrane. The sequence is that of Protein translocase subunit SecA from Mannheimia succiniciproducens (strain KCTC 0769BP / MBEL55E).